Reading from the N-terminus, the 145-residue chain is MNPAHLLVLLAVCVSLLGAANIPPQPLNLLQFKNMIQCAGSRLWVAYVKYGCYCGPGGTGTPLDQLDRCCQTHDHCYDNAKKFGNCIPYFKTYEYTCNKPDITCTDAKGSCGRTVCDCDRAAAICFAAAPYNLANFGIDKEKHCQ.

An N-terminal signal peptide occupies residues 1–19 (MNPAHLLVLLAVCVSLLGA). The propeptide occupies 20–27 (ANIPPQPL). 7 cysteine pairs are disulfide-bonded: Cys38-Cys97, Cys52-Cys144, Cys54-Cys70, Cys69-Cys125, Cys76-Cys118, Cys86-Cys111, and Cys104-Cys116. Residues Tyr53, Gly55, and Gly57 each coordinate Ca(2+). His73 is an active-site residue. Asp74 is a Ca(2+) binding site. Asp119 is a catalytic residue.

The cofactor is Ca(2+). Expressed by the venom gland.

The protein localises to the secreted. The enzyme catalyses a 1,2-diacyl-sn-glycero-3-phosphocholine + H2O = a 1-acyl-sn-glycero-3-phosphocholine + a fatty acid + H(+). In terms of biological role, snake venom phospholipase A2 (PLA2) that has only a weak enzymatic activity. Inhibits neuromuscular transmission by blocking acetylcholine release from the nerve termini. PLA2 catalyzes the calcium-dependent hydrolysis of the 2-acyl groups in 3-sn-phosphoglycerides. The chain is Basic phospholipase A2 Vb-2 from Bungarus fasciatus (Banded krait).